Here is a 74-residue protein sequence, read N- to C-terminus: Mu-conotoxin-like T3.1 (74 aa).

An N-terminal signal peptide occupies residues 1–19; that stretch reads MSKLGVLLTICLLLFPLTA. Positions 20 to 74 are excised as a propeptide; the sequence is LPMDGDEPADRPAERMQDNISSEQHPLFEERHGCCKGPEGCSSRECRPQHCCGRR. 3 disulfides stabilise this stretch: cysteine 53–cysteine 65, cysteine 54–cysteine 70, and cysteine 60–cysteine 71. Residue proline 57 is modified to 4-hydroxyproline. 2 positions are modified to 4-carboxyglutamate: glutamate 58 and glutamate 64. A 4-hydroxyproline modification is found at proline 67. Cysteine 71 is modified (cysteine amide).

It belongs to the conotoxin M superfamily. As to expression, expressed by the venom duct.

The protein resides in the secreted. Its function is as follows. Mu-conotoxins block voltage-gated sodium channels (Nav). In vitro, this synthetic peptide displays a low blocking effect in mouse extensor digitorum longus muscles (IC(50)=616 nM). This is Mu-conotoxin-like T3.1 from Conus tulipa (Fish-hunting cone snail).